A 335-amino-acid chain; its full sequence is Transcriptional activator NphR (335 aa).

The 99-residue stretch at 231 to 329 folds into the HTH araC/xylS-type domain; the sequence is TRVQRVIEQN…GSSPGLYRKE (99 aa). 2 consecutive DNA-binding regions (H-T-H motif) follow at residues 249-270 and 296-319; these read SDIA…NAEG and VADV…RSTF.

Transcriptional activator of nphA1 and nphA2 involved in the degradation of 4-nitrophenol (4-NP). The sequence is that of Transcriptional activator NphR (nphR) from Rhodococcus sp.